Reading from the N-terminus, the 578-residue chain is Paraneoplastic antigen Ma6F (578 aa).

Disordered stretches follow at residues 106–221 and 441–578; these read AQPQ…AGAA and AAPV…PPGK. Residues 112–129 are compositionally biased toward low complexity; sequence AVARGAGEAGAAGEAGSV. Positions 147 to 159 are enriched in gly residues; it reads GGIGEAGGVGEAG. Over residues 160–173 the composition is skewed to low complexity; it reads AAGEAGAAGEAGAA. Gly residues predominate over residues 174–211; that stretch reads GEAGGAGEAGGAGEAGGAGEEGGTGEEGGAGEAGGAGE. Residues 449-461 show a composition bias toward low complexity; that stretch reads PAAAQASPAQGDA. 2 stretches are compositionally biased toward acidic residues: residues 462–473 and 556–566; these read SEADPGAEDADE and EESENEDEDGA.

The protein is Paraneoplastic antigen Ma6F of Homo sapiens (Human).